Here is a 305-residue protein sequence, read N- to C-terminus: Nucleotide-binding protein Rxyl_2009 (305 aa).

24 to 31 lines the ATP pocket; the sequence is GLSGAGKS. 75 to 78 serves as a coordination point for GTP; sequence DIRG.

The protein belongs to the RapZ-like family.

Its function is as follows. Displays ATPase and GTPase activities. In Rubrobacter xylanophilus (strain DSM 9941 / JCM 11954 / NBRC 16129 / PRD-1), this protein is Nucleotide-binding protein Rxyl_2009.